An 84-amino-acid polypeptide reads, in one-letter code: Small ribosomal subunit protein uS17 (84 aa).

It belongs to the universal ribosomal protein uS17 family. In terms of assembly, part of the 30S ribosomal subunit.

Its function is as follows. One of the primary rRNA binding proteins, it binds specifically to the 5'-end of 16S ribosomal RNA. This Borrelia duttonii (strain Ly) protein is Small ribosomal subunit protein uS17.